We begin with the raw amino-acid sequence, 270 residues long: MPEIIIVKNEAEAGEIYGRCVADLIKAKPDAVLGLATGSSPLAAYQALAKIVKDEAIDVSGVRGFALDEYIGLPLTHPESYHATIHRTVVEPLGLDPAKVHVPGDVLNGTPLEDGDKVALAGPAYDRAIEAAGGIDVQILGIGTDGHVGFNEPGSSLASGTRVKTLAEQTRVDNARFFDNDINQVPTHCITQGIGTIMKARHLVLLAFGAGKAEAIEETVEGGLSAFCPASALQMHPHATIIVDEEAASRLRHKDYYRYAYTHKPAWQGI.

Asp68 (proton acceptor; for enolization step) is an active-site residue. Residue Asp145 is the For ring-opening step of the active site. The Proton acceptor; for ring-opening step role is filled by His147. Glu152 (for ring-opening step) is an active-site residue.

It belongs to the glucosamine/galactosamine-6-phosphate isomerase family. NagB subfamily.

It carries out the reaction alpha-D-glucosamine 6-phosphate + H2O = beta-D-fructose 6-phosphate + NH4(+). It participates in amino-sugar metabolism; N-acetylneuraminate degradation; D-fructose 6-phosphate from N-acetylneuraminate: step 5/5. Catalyzes the reversible isomerization-deamination of glucosamine 6-phosphate (GlcN6P) to form fructose 6-phosphate (Fru6P) and ammonium ion. This is Glucosamine-6-phosphate deaminase from Bifidobacterium longum subsp. infantis (strain ATCC 15697 / DSM 20088 / JCM 1222 / NCTC 11817 / S12).